Reading from the N-terminus, the 176-residue chain is Large ribosomal subunit protein uL10 (176 aa).

This sequence belongs to the universal ribosomal protein uL10 family. As to quaternary structure, part of the ribosomal stalk of the 50S ribosomal subunit. The N-terminus interacts with L11 and the large rRNA to form the base of the stalk. The C-terminus forms an elongated spine to which L12 dimers bind in a sequential fashion forming a multimeric L10(L12)X complex.

Functionally, forms part of the ribosomal stalk, playing a central role in the interaction of the ribosome with GTP-bound translation factors. The sequence is that of Large ribosomal subunit protein uL10 (rplJ) from Streptomyces antibioticus.